We begin with the raw amino-acid sequence, 194 residues long: MGIYKYIREAWKRPKESYVRQLLWERLQQWRREPAVVRIERPTRLDRARALGYKPKQGIIVVRVRVRRGGLRKPRPKNSKKPATLGVNKITMGKSIQRIAEERAARKYPNMEVLNSYWVGEDGKHKWYEVILVDPYHPAIKADPQLNWLCTGKHRGRAFRGLTSAGKKGRGLRNKGIGAEKVRPSIRAHGRRGK.

Residues 164 to 194 (SAGKKGRGLRNKGIGAEKVRPSIRAHGRRGK) are disordered. The segment covering 184-194 (PSIRAHGRRGK) has biased composition (basic residues).

The protein belongs to the eukaryotic ribosomal protein eL15 family.

The chain is Large ribosomal subunit protein eL15 (rpl15e) from Methanocaldococcus jannaschii (strain ATCC 43067 / DSM 2661 / JAL-1 / JCM 10045 / NBRC 100440) (Methanococcus jannaschii).